The primary structure comprises 391 residues: Chorismate synthase (391 aa).

Arg-48 is an NADP(+) binding site. FMN-binding positions include 126 to 128 (RSS), Gly-287, 302 to 306 (KPTSS), and Arg-329.

This sequence belongs to the chorismate synthase family. It depends on FMNH2 as a cofactor.

The enzyme catalyses 5-O-(1-carboxyvinyl)-3-phosphoshikimate = chorismate + phosphate. The protein operates within metabolic intermediate biosynthesis; chorismate biosynthesis; chorismate from D-erythrose 4-phosphate and phosphoenolpyruvate: step 7/7. Functionally, catalyzes the anti-1,4-elimination of the C-3 phosphate and the C-6 proR hydrogen from 5-enolpyruvylshikimate-3-phosphate (EPSP) to yield chorismate, which is the branch point compound that serves as the starting substrate for the three terminal pathways of aromatic amino acid biosynthesis. This reaction introduces a second double bond into the aromatic ring system. The polypeptide is Chorismate synthase (Sulfolobus acidocaldarius (strain ATCC 33909 / DSM 639 / JCM 8929 / NBRC 15157 / NCIMB 11770)).